We begin with the raw amino-acid sequence, 361 residues long: Phosphoserine aminotransferase (361 aa).

An L-glutamate-binding site is contributed by Arg43. Residues 77–78 (AS), Trp103, Thr153, Asp173, and Gln196 each bind pyridoxal 5'-phosphate. Lys197 carries the post-translational modification N6-(pyridoxal phosphate)lysine. 238-239 (NT) provides a ligand contact to pyridoxal 5'-phosphate.

The protein belongs to the class-V pyridoxal-phosphate-dependent aminotransferase family. SerC subfamily. As to quaternary structure, homodimer. Pyridoxal 5'-phosphate is required as a cofactor.

The protein localises to the cytoplasm. It carries out the reaction O-phospho-L-serine + 2-oxoglutarate = 3-phosphooxypyruvate + L-glutamate. The catalysed reaction is 4-(phosphooxy)-L-threonine + 2-oxoglutarate = (R)-3-hydroxy-2-oxo-4-phosphooxybutanoate + L-glutamate. It participates in amino-acid biosynthesis; L-serine biosynthesis; L-serine from 3-phospho-D-glycerate: step 2/3. Its pathway is cofactor biosynthesis; pyridoxine 5'-phosphate biosynthesis; pyridoxine 5'-phosphate from D-erythrose 4-phosphate: step 3/5. Catalyzes the reversible conversion of 3-phosphohydroxypyruvate to phosphoserine and of 3-hydroxy-2-oxo-4-phosphonooxybutanoate to phosphohydroxythreonine. The polypeptide is Phosphoserine aminotransferase (Pseudomonas syringae pv. syringae (strain B728a)).